The primary structure comprises 631 residues: Glutamine--fructose-6-phosphate aminotransferase [isomerizing] (631 aa).

The active-site Nucleophile; for GATase activity is the Cys2. A Glutamine amidotransferase type-2 domain is found at 2–225 (CGIVGYIGTQ…NGEIARLTPL (224 aa)). SIS domains lie at 298–446 (LDPQ…QRHS) and 480–621 (LAHE…VDQP). Lys626 serves as the catalytic For Fru-6P isomerization activity.

In terms of assembly, homodimer.

It localises to the cytoplasm. It catalyses the reaction D-fructose 6-phosphate + L-glutamine = D-glucosamine 6-phosphate + L-glutamate. Its function is as follows. Catalyzes the first step in hexosamine metabolism, converting fructose-6P into glucosamine-6P using glutamine as a nitrogen source. The sequence is that of Glutamine--fructose-6-phosphate aminotransferase [isomerizing] from Synechocystis sp. (strain ATCC 27184 / PCC 6803 / Kazusa).